A 72-amino-acid chain; its full sequence is Sperm protein associated with the nucleus on the X chromosome N1 (72 aa).

Positions 1–40 are disordered; sequence MEKPTSSTNGEKRKSPCDSNNKNDEMQETPNRDLVLEPSL. Residues 10–35 are compositionally biased toward basic and acidic residues; that stretch reads GEKRKSPCDSNNKNDEMQETPNRDLV.

Belongs to the SPAN-X family.

The protein is Sperm protein associated with the nucleus on the X chromosome N1 (SPANXN1) of Gorilla gorilla gorilla (Western lowland gorilla).